A 215-amino-acid polypeptide reads, in one-letter code: Nascent polypeptide-associated complex subunit alpha (215 aa).

The disordered stretch occupies residues M1–S81. Polar residues predominate over residues V9 to E28. A compositionally biased stretch (acidic residues) spans S29–G40. Position 43 is a phosphoserine; by ILK1 (S43). Low complexity predominate over residues T44–A57. Residues Q69–M80 are required for DNA-binding. The NAC-A/B domain occupies S70–A135. The RNA/DNA-binding stretch occupies residues R93–K108. Position 132 is a phosphoserine (S132). The residue at position 142 (K142) is an N6-acetyllysine; alternate. Residue K142 forms a Glycyl lysine isopeptide (Lys-Gly) (interchain with G-Cter in SUMO2); alternate linkage. A Phosphothreonine; by GSK3-beta modification is found at T159. T161 is modified (phosphothreonine). Phosphoserine is present on residues S166, S186, S191, and S203. In terms of domain architecture, UBA spans V176 to L213.

It belongs to the NAC-alpha family. Part of the nascent polypeptide-associated complex (NAC), which is a heterodimer of NACA and BTF3 (via NAC-A/B domains). NAC associates with ribosomes through the BTF3/NACB subunit and contacts the ribosomal protein L23, which is positioned near the exiting site. Both subunits can contact nascent polypeptide chains. NACA may also form homodimers, and only this form binds DNA. Interacts with TBP and JUN. Post-translationally, phosphorylation of Ser-43 by ILK during cell adhesion may promote nuclear localization. Phosphorylation of Thr-159 by GSK3B may promote proteasome mediated degradation.

The protein resides in the cytoplasm. It is found in the nucleus. Its function is as follows. Prevents inappropriate targeting of non-secretory polypeptides to the endoplasmic reticulum (ER). Binds to nascent polypeptide chains as they emerge from the ribosome and blocks their interaction with the signal recognition particle (SRP), which normally targets nascent secretory peptides to the ER. Also reduces the inherent affinity of ribosomes for protein translocation sites in the ER membrane (M sites). May act as a specific coactivator for JUN, binding to DNA and stabilizing the interaction of JUN homodimers with target gene promoters. The sequence is that of Nascent polypeptide-associated complex subunit alpha from Chinchilla lanigera (Long-tailed chinchilla).